The sequence spans 227 residues: Riboflavin kinase (227 aa).

An H-T-H motif-like region spans residues 1–92; sequence MSKDYEVFPL…LKRTIDSSTF (92 aa). Residues 93–227 form a riboflavin kinase region; it reads LTLRGYVVPG…GDKVEVVIPV (135 aa). 102 to 107 contributes to the CDP binding site; the sequence is GLGEGA. Residues Thr131 and Asn133 each coordinate Mg(2+). Thr194 and Glu202 together coordinate FMN. A CDP-binding site is contributed by 207 to 210; it reads VRLR.

It belongs to the archaeal riboflavin kinase family. Mg(2+) is required as a cofactor.

It catalyses the reaction riboflavin + CTP = CDP + FMN + H(+). The protein operates within cofactor biosynthesis; FMN biosynthesis; FMN from riboflavin (CTP route): step 1/1. Catalyzes the CTP-dependent phosphorylation of riboflavin (vitamin B2) to form flavin mononucleotide (FMN). In Thermofilum pendens (strain DSM 2475 / Hrk 5), this protein is Riboflavin kinase (ribK).